A 458-amino-acid chain; its full sequence is Exodeoxyribonuclease 7 large subunit (458 aa).

It belongs to the XseA family. As to quaternary structure, heterooligomer composed of large and small subunits.

The protein resides in the cytoplasm. The catalysed reaction is Exonucleolytic cleavage in either 5'- to 3'- or 3'- to 5'-direction to yield nucleoside 5'-phosphates.. In terms of biological role, bidirectionally degrades single-stranded DNA into large acid-insoluble oligonucleotides, which are then degraded further into small acid-soluble oligonucleotides. This is Exodeoxyribonuclease 7 large subunit from Escherichia coli (strain UTI89 / UPEC).